Reading from the N-terminus, the 699-residue chain is Polyribonucleotide nucleotidyltransferase (699 aa).

2 residues coordinate Mg(2+): D485 and D491. One can recognise a KH domain in the interval 552–611 (PRITTIKINPEKIRDVIGKGGAVIRALTEETGTTIELEDDGTVKIASNNGDATREAIRRI). The S1 motif domain occupies 621 to 689 (GRLYTGKVIR…RQGRVRLSIK (69 aa)).

This sequence belongs to the polyribonucleotide nucleotidyltransferase family. As to quaternary structure, component of the RNA degradosome, which is a multiprotein complex involved in RNA processing and mRNA degradation. Mg(2+) is required as a cofactor.

It is found in the cytoplasm. It catalyses the reaction RNA(n+1) + phosphate = RNA(n) + a ribonucleoside 5'-diphosphate. In terms of biological role, involved in mRNA degradation. Catalyzes the phosphorolysis of single-stranded polyribonucleotides processively in the 3'- to 5'-direction. This is Polyribonucleotide nucleotidyltransferase from Shewanella amazonensis (strain ATCC BAA-1098 / SB2B).